Consider the following 359-residue polypeptide: Nicotinate-nucleotide--dimethylbenzimidazole phosphoribosyltransferase (359 aa).

Glu-318 (proton acceptor) is an active-site residue.

It belongs to the CobT family. Homodimer.

The enzyme catalyses 5,6-dimethylbenzimidazole + nicotinate beta-D-ribonucleotide = alpha-ribazole 5'-phosphate + nicotinate + H(+). Its pathway is nucleoside biosynthesis; alpha-ribazole biosynthesis; alpha-ribazole from 5,6-dimethylbenzimidazole: step 1/2. Catalyzes the synthesis of alpha-ribazole-5'-phosphate from nicotinate mononucleotide (NAMN) and 5,6-dimethylbenzimidazole (DMB). The polypeptide is Nicotinate-nucleotide--dimethylbenzimidazole phosphoribosyltransferase (Escherichia coli O127:H6 (strain E2348/69 / EPEC)).